Consider the following 239-residue polypeptide: Purine nucleoside phosphorylase DeoD-type (239 aa).

A purine D-ribonucleoside is bound at residue histidine 5. Residues glycine 21, arginine 25, arginine 44, and 88–91 (RVGS) contribute to the phosphate site. Residues 180–182 (EME) and 204–205 (SD) each bind a purine D-ribonucleoside. Catalysis depends on aspartate 205, which acts as the Proton donor.

It belongs to the PNP/UDP phosphorylase family. As to quaternary structure, homohexamer; trimer of homodimers.

It carries out the reaction a purine D-ribonucleoside + phosphate = a purine nucleobase + alpha-D-ribose 1-phosphate. The catalysed reaction is a purine 2'-deoxy-D-ribonucleoside + phosphate = a purine nucleobase + 2-deoxy-alpha-D-ribose 1-phosphate. Catalyzes the reversible phosphorolytic breakdown of the N-glycosidic bond in the beta-(deoxy)ribonucleoside molecules, with the formation of the corresponding free purine bases and pentose-1-phosphate. In Myxococcus xanthus (strain DK1622), this protein is Purine nucleoside phosphorylase DeoD-type.